A 644-amino-acid polypeptide reads, in one-letter code: Exoribonuclease 2 (644 aa).

Residues 189–516 (RRDLTALDFV…NHRLLKAIIK (328 aa)) form the RNB domain. Residues 561-643 (DTRFAAEIID…ETRSIIARPA (83 aa)) form the S1 motif domain.

The protein belongs to the RNR ribonuclease family. RNase II subfamily.

The protein resides in the cytoplasm. The enzyme catalyses Exonucleolytic cleavage in the 3'- to 5'-direction to yield nucleoside 5'-phosphates.. Functionally, involved in mRNA degradation. Hydrolyzes single-stranded polyribonucleotides processively in the 3' to 5' direction. This Klebsiella pneumoniae subsp. pneumoniae (strain ATCC 700721 / MGH 78578) protein is Exoribonuclease 2.